Reading from the N-terminus, the 64-residue chain is Prokaryotic ubiquitin-like protein Pup (64 aa).

The segment at 1 to 37 (MAQEQTKRGGGGGEDDDLTGSTAAGQERREKLTDETD) is disordered. The segment at 21-58 (STAAGQERREKLTDETDDLLDEIDDVLEENAEDFVRAY) is ARC ATPase binding. Residues 23–52 (AAGQERREKLTDETDDLLDEIDDVLEENAE) are a coiled coil. Gln64 bears the Deamidated glutamine mark. Gln64 participates in a covalent cross-link: Isoglutamyl lysine isopeptide (Gln-Lys) (interchain with K-? in acceptor proteins).

It belongs to the prokaryotic ubiquitin-like protein family. In terms of assembly, strongly interacts with the proteasome-associated ATPase ARC through a hydrophobic interface; the interacting region of Pup lies in its C-terminal half. There is one Pup binding site per ARC hexamer ring. Post-translationally, is modified by deamidation of its C-terminal glutamine to glutamate by the deamidase Dop, a prerequisite to the subsequent pupylation process.

It participates in protein degradation; proteasomal Pup-dependent pathway. In terms of biological role, protein modifier that is covalently attached to lysine residues of substrate proteins, thereby targeting them for proteasomal degradation. The tagging system is termed pupylation. This chain is Prokaryotic ubiquitin-like protein Pup, found in Mycolicibacterium vanbaalenii (strain DSM 7251 / JCM 13017 / BCRC 16820 / KCTC 9966 / NRRL B-24157 / PYR-1) (Mycobacterium vanbaalenii).